Here is a 340-residue protein sequence, read N- to C-terminus: tRNA N6-adenosine threonylcarbamoyltransferase (340 aa).

Fe cation-binding residues include histidine 111 and histidine 115. Substrate is bound by residues leucine 134–glycine 138, aspartate 167, glycine 180, and asparagine 276. Residue aspartate 304 participates in Fe cation binding.

The protein belongs to the KAE1 / TsaD family. Requires Fe(2+) as cofactor.

Its subcellular location is the cytoplasm. The enzyme catalyses L-threonylcarbamoyladenylate + adenosine(37) in tRNA = N(6)-L-threonylcarbamoyladenosine(37) in tRNA + AMP + H(+). Required for the formation of a threonylcarbamoyl group on adenosine at position 37 (t(6)A37) in tRNAs that read codons beginning with adenine. Is involved in the transfer of the threonylcarbamoyl moiety of threonylcarbamoyl-AMP (TC-AMP) to the N6 group of A37, together with TsaE and TsaB. TsaD likely plays a direct catalytic role in this reaction. This Helicobacter pylori (strain G27) protein is tRNA N6-adenosine threonylcarbamoyltransferase.